The chain runs to 270 residues: Regulatory protein RecX (270 aa).

Belongs to the RecX family.

It localises to the cytoplasm. Functionally, modulates RecA activity. This Bacillus cereus (strain 03BB102) protein is Regulatory protein RecX.